The primary structure comprises 475 residues: Gelsolin-like protein 1 (475 aa).

The actin binding, actin severing, Ca-sensitive stretch occupies residues 1-131 (MGGTSLDPAL…GYRHVDDQFK (131 aa)). The necessary for barbed end capping activity stretch occupies residues 1-239 (MGGTSLDPAL…VRKVSKGKDD (239 aa)). The Gelsolin-like 1 repeat unit spans residues 27–105 (FVLEPVPEVD…IQNYESPLFL (79 aa)). The interval 70–73 (DEIG) is actin-actin interfilament contact point. The interval 106–147 (SYFPDGIRYVSGGYESGYRHVDDQFKNWKPHLFHCKGKRNVR) is required for synapse elimination during development. The interval 133-227 (WKPHLFHCKG…STFWSYFGGV (95 aa)) is required for phosphatidylinositol 4,5-bisphosphate binding and regulation. Gelsolin-like repeat units lie at residues 148–208 (CTEV…KVHI), 275–341 (RKEQ…STQF), and 375–447 (EIAN…PPTF). Positions 240–475 (DDNYWKRLTE…VQNMRRLLFH (236 aa)) are F- and G-actin binding, Ca-independent. The segment at 248–348 (TEQITLWKVS…TQFTQWFRDW (101 aa)) is inhibitory for phosphatidylinositol 4,5-bisphosphate binding activity.

It belongs to the villin/gelsolin family. As to quaternary structure, monomer. Binds to actin monomers and filaments. Cleavage by caspase ced-3 activates its actin-severing function and is required for the elimination of presynaptic components during development.

The protein localises to the cytoplasm. The protein resides in the cytoskeleton. Functionally, calcium-regulated, actin-modulating protein that binds to the plus (or barbed) ends of actin monomers or filaments, preventing monomer exchange (end-blocking or capping). Binds actin but does not nucleate actin polymerization, albeit slows down elongation by blocking the barbed ends. By promoting actin depolymerization, required for the elimination of presynaptic components downstream of the egl-1, ced-4 and ced-3 apoptotic pathway during larval development. This chain is Gelsolin-like protein 1, found in Caenorhabditis elegans.